A 664-amino-acid chain; its full sequence is tRNA uridine 5-carboxymethylaminomethyl modification enzyme MnmG (664 aa).

FAD is bound by residues 14–19, Val-126, and Ser-183; that span reads GGGHSG. An NAD(+)-binding site is contributed by 277 to 291; that stretch reads GPRYCPSIEDKIDRF. Gln-374 is a binding site for FAD.

The protein belongs to the MnmG family. As to quaternary structure, homodimer. Heterotetramer of two MnmE and two MnmG subunits. FAD serves as cofactor.

It is found in the cytoplasm. In terms of biological role, NAD-binding protein involved in the addition of a carboxymethylaminomethyl (cmnm) group at the wobble position (U34) of certain tRNAs, forming tRNA-cmnm(5)s(2)U34. The protein is tRNA uridine 5-carboxymethylaminomethyl modification enzyme MnmG of Salinibacter ruber (strain DSM 13855 / M31).